We begin with the raw amino-acid sequence, 304 residues long: Probable WRKY transcription factor 13 (304 aa).

The tract at residues 141–190 (QKNNHGSEIDVDDNDDEVGDGGGINDDDNGRHHHHDTPSRHDKHNTASLG) is disordered. A compositionally biased stretch (acidic residues) spans 149–159 (IDVDDNDDEVG). Residues 217–282 (SEVDVLDDGY…YEGRHLHSPS (66 aa)) constitute a DNA-binding region (WRKY).

The protein belongs to the WRKY group II-c family.

It localises to the nucleus. Transcription factor. Interacts specifically with the W box (5'-(T)TGAC[CT]-3'), a frequently occurring elicitor-responsive cis-acting element. The chain is Probable WRKY transcription factor 13 (WRKY13) from Arabidopsis thaliana (Mouse-ear cress).